The following is a 163-amino-acid chain: Glutathione peroxidase 1 (163 aa).

C36 is an active-site residue.

It belongs to the glutathione peroxidase family.

Its subcellular location is the cytoplasm. It catalyses the reaction 2 glutathione + H2O2 = glutathione disulfide + 2 H2O. Its function is as follows. May constitute a glutathione peroxidase-like protective system against oxidative stresses. The sequence is that of Glutathione peroxidase 1 (gpx-1) from Caenorhabditis elegans.